A 41-amino-acid polypeptide reads, in one-letter code: Large ribosomal subunit protein bL36 (41 aa).

Belongs to the bacterial ribosomal protein bL36 family.

The chain is Large ribosomal subunit protein bL36 from Rhodopseudomonas palustris (strain BisB18).